A 508-amino-acid chain; its full sequence is Ribose import ATP-binding protein RbsA 2 (508 aa).

ABC transporter domains follow at residues 6-241 and 254-499; these read LTIH…VGRE and ERSG…SGMG. Residue 38-45 coordinates ATP; that stretch reads GENGAGKS.

It belongs to the ABC transporter superfamily. Ribose importer (TC 3.A.1.2.1) family. The complex is composed of an ATP-binding protein (RbsA), two transmembrane proteins (RbsC) and a solute-binding protein (RbsB).

Its subcellular location is the cell inner membrane. The enzyme catalyses D-ribose(out) + ATP + H2O = D-ribose(in) + ADP + phosphate + H(+). In terms of biological role, part of the ABC transporter complex RbsABC involved in ribose import. Responsible for energy coupling to the transport system. The chain is Ribose import ATP-binding protein RbsA 2 from Rhizobium etli (strain ATCC 51251 / DSM 11541 / JCM 21823 / NBRC 15573 / CFN 42).